Reading from the N-terminus, the 416-residue chain is Enterobactin exporter EntS (416 aa).

Residues 1-21 (MNRQSWLLNLSLLKTHPAFRA) are Cytoplasmic-facing. The chain crosses the membrane as a helical span at residues 22–42 (VFLARFISIVSLGLLGVAVPV). Residues 43–55 (QIQMMTHSTWQVG) are Periplasmic-facing. Residues 56–76 (LSVTLTGSAMFVGLMVGGVLA) traverse the membrane as a helical segment. At 77–83 (DRYERKK) the chain is on the cytoplasmic side. Residues 84–104 (VILLARGTCGIGFIGLCLNAL) form a helical membrane-spanning segment. At 105–109 (LPEPS) the chain is on the periplasmic side. A helical transmembrane segment spans residues 110 to 130 (LLAIYLLGLWDGFFASLGVTA). The Cytoplasmic portion of the chain corresponds to 131–156 (LLAATPALVGRENLMQAGAITMLTVR). A helical membrane pass occupies residues 157-177 (LGSVISPMLGGVLLATGGVAW). Residue N178 is a topological domain, periplasmic. A helical membrane pass occupies residues 179-199 (YGLAAAGTFITLLPLLSLPAL). At 200-218 (PPPPQPREHPLKSLLAAFR) the chain is on the cytoplasmic side. A helical transmembrane segment spans residues 219–239 (FLLSSPLIGGIALLGGLLTMA). Over 240–256 (SAVRVLYPALAINWHMS) the chain is Periplasmic. A helical membrane pass occupies residues 257 to 277 (AAQIGLLYAAIPLGAAVGALT). At 278–287 (SGQLAHSVRP) the chain is on the cytoplasmic side. Residues 288–307 (GLLMLVSTVGSFLAIGVFGL) traverse the membrane as a helical segment. At 308–313 (MPVWLL) the chain is on the periplasmic side. A helical transmembrane segment spans residues 314 to 336 (GVICLALFGWLSAISSLLQYTLL). Over 337 to 356 (QTQTPEAMLGRINGLWTAQN) the chain is Cytoplasmic. A helical transmembrane segment spans residues 357 to 377 (VTGDAIGAALLGGLGAMMTPV). Position 378 (A378) is a topological domain, periplasmic. A helical transmembrane segment spans residues 379–399 (SASVSGFGLVIVGLLLMLLLG). Over 400–416 (ELRRFRQPPPVPDGAPL) the chain is Cytoplasmic.

This sequence belongs to the major facilitator superfamily. EntS (TC 2.A.1.38) family.

It is found in the cell inner membrane. In terms of biological role, component of an export pathway for enterobactin. This Citrobacter koseri (strain ATCC BAA-895 / CDC 4225-83 / SGSC4696) protein is Enterobactin exporter EntS.